The chain runs to 227 residues: MERPLESYKKEAAHAAIAYVQDGMVVGLGTGSTARYAVLELARRLREGELKGVVGVPTSRATEELAKREGIPLVDLPPEGVDLAIDGADEIAPGLALIKGMGGALLREKIVERVAKEFIVIADHTKKVPVLGRGPVPVEIVPFGYRATLKAIADLGGEPELRMDGDEFYFTDGGHLIADCRFGPIGDPLGLHRALLEIPGVVETGLFVGMATRALVAGPFGVEELLP.

Substrate contacts are provided by residues 30–33 (TGST), 86–89 (DGAD), and 99–102 (KGMG). Glutamate 108 functions as the Proton acceptor in the catalytic mechanism. Lysine 126 is a substrate binding site.

The protein belongs to the ribose 5-phosphate isomerase family. Homodimer.

It carries out the reaction aldehydo-D-ribose 5-phosphate = D-ribulose 5-phosphate. It participates in carbohydrate degradation; pentose phosphate pathway; D-ribose 5-phosphate from D-ribulose 5-phosphate (non-oxidative stage): step 1/1. In terms of biological role, catalyzes the reversible conversion of ribose-5-phosphate to ribulose 5-phosphate. The polypeptide is Ribose-5-phosphate isomerase A (Thermus thermophilus (strain ATCC 27634 / DSM 579 / HB8)).